The primary structure comprises 393 residues: Stearoyl-[acyl-carrier-protein] 9-desaturase, chloroplastic (393 aa).

Residues 1 to 30 constitute a chloroplast transit peptide; sequence MALNINGVSLKSHKMLPFPCSSARSERVFM. 5 residues coordinate Fe cation: Glu135, Glu173, His176, Glu259, and His262.

This sequence belongs to the fatty acid desaturase type 2 family. Homodimer. Requires Fe(2+) as cofactor.

It is found in the plastid. It localises to the chloroplast. The enzyme catalyses octadecanoyl-[ACP] + 2 reduced [2Fe-2S]-[ferredoxin] + O2 + 2 H(+) = (9Z)-octadecenoyl-[ACP] + 2 oxidized [2Fe-2S]-[ferredoxin] + 2 H2O. Its pathway is lipid metabolism; fatty acid metabolism. In terms of biological role, converts stearoyl-ACP to oleoyl-ACP by introduction of a cis double bond between carbons 9 and 10 of the acyl chain. The chain is Stearoyl-[acyl-carrier-protein] 9-desaturase, chloroplastic from Solanum tuberosum (Potato).